We begin with the raw amino-acid sequence, 141 residues long: Large ribosomal subunit protein uL11 (141 aa).

It belongs to the universal ribosomal protein uL11 family. Part of the ribosomal stalk of the 50S ribosomal subunit. Interacts with L10 and the large rRNA to form the base of the stalk. L10 forms an elongated spine to which L12 dimers bind in a sequential fashion forming a multimeric L10(L12)X complex. One or more lysine residues are methylated.

In terms of biological role, forms part of the ribosomal stalk which helps the ribosome interact with GTP-bound translation factors. In Lacticaseibacillus casei (strain BL23) (Lactobacillus casei), this protein is Large ribosomal subunit protein uL11.